Here is a 498-residue protein sequence, read N- to C-terminus: MINKKISLGVLSILTAFSLQSVSYACTGFIIGKDLTKDGSLLYGRTEDLEPHHNKNFIVRLAKDNPAGEKWKDLSNGFEYPLPEHSYRYSAIPDVTPNKGVYDEAGFNEFGVSMSATVSASANDAIQKIDPYVKNGLAESSMTSVILPSVKTAREGVALIAKIVTEKGAAEGNIVTLADKDGIWYMEILSGHQYVAIKFPDDKYAVFPNTFYLGHVDFNDKENTIASEDVEKVAKKAKSYTEVDGKFHIAKSYNPPLNDANRSRSFSGIKSLDPDSKVTYKDSNYELLQSTDKTFSLEDAMKLQRNRFEGLDLKPLDQMALDGKGKPKSKKAVKGYAYPISNPNVMEAHIFQLKKDIPAELGGVMWLSIGSPRNAPYLPYLGNISRTYEAYQEKSTQYNDKSWYWTVSHINDLVAAHPKPFGTKVIDEMKGLEKTWIAEQDKSTKEISDLVVSDPKAAQEKADKISLDRAEKTFKRLKAIEAKLVKEKPKNKKGLNRS.

Cysteine 26 is an active-site residue.

Belongs to the peptidase C69 family.

The enzyme catalyses an L-aminoacyl-L-amino acid + H2O = 2 an L-alpha-amino acid. In Streptococcus pyogenes serotype M1, this protein is Probable dipeptidase B (pepDB).